Reading from the N-terminus, the 315-residue chain is MASSSYTSLLVLVALVTAASAQLSPTFYDTSCPRALATIKSGVMAAVTSDPRMGASLLRLHFHDCFVQGCDASVLLSGMEQNAIPNAGSLRGFGVIDSIKTQIEAICKQTVSCADILTVAARDSVVALGGPSWTVPLGRRDSIDANENEANTDLPGFNSSRAELEAAFLKKGGLNTVDMVALSGAHTIGQAQCSTFRARIYGGDTNINAAYAASLRANCPQTVGSGDGSLANLDTTTANTFDNAYYTNLMSQKGLLHSDQVLFNNDTTDNTVRNFASNPAAFSSSFTTAMIKMGNIAPKTGTQGQIRLSCSRVNS.

The signal sequence occupies residues 1–21 (MASSSYTSLLVLVALVTAASA). Gln22 is subject to Pyrrolidone carboxylic acid. 4 disulfide bridges follow: Cys32–Cys107, Cys65–Cys70, Cys113–Cys310, and Cys193–Cys219. His63 acts as the Proton acceptor in catalysis. Residues Asp64, Val67, Gly69, Asp71, and Ser73 each coordinate Ca(2+). Pro155 contributes to the substrate binding site. Asn158 is a glycosylation site (N-linked (GlcNAc...) asparagine). Heme b is bound at residue His186. Residue Thr187 coordinates Ca(2+). Ca(2+)-binding residues include Asp234, Thr237, and Asp242. N-linked (GlcNAc...) asparagine glycosylation is present at Asn265.

It belongs to the peroxidase family. Classical plant (class III) peroxidase subfamily. Ca(2+) serves as cofactor. Requires heme b as cofactor.

The protein localises to the secreted. It catalyses the reaction 2 a phenolic donor + H2O2 = 2 a phenolic radical donor + 2 H2O. Functionally, removal of H(2)O(2), oxidation of toxic reductants, biosynthesis and degradation of lignin, suberization, auxin catabolism, response to environmental stresses such as wounding, pathogen attack and oxidative stress. These functions might be dependent on each isozyme/isoform in each plant tissue. Involved in defense response to powdery meldew fungus. The protein is Peroxidase 1 of Hordeum vulgare (Barley).